The primary structure comprises 310 residues: N-acetyl-gamma-glutamyl-phosphate reductase (310 aa).

Residue cysteine 117 is part of the active site.

It belongs to the NAGSA dehydrogenase family. Type 2 subfamily.

Its subcellular location is the cytoplasm. The catalysed reaction is N-acetyl-L-glutamate 5-semialdehyde + phosphate + NADP(+) = N-acetyl-L-glutamyl 5-phosphate + NADPH + H(+). Its pathway is amino-acid biosynthesis; L-arginine biosynthesis; N(2)-acetyl-L-ornithine from L-glutamate: step 3/4. In terms of biological role, catalyzes the NADPH-dependent reduction of N-acetyl-5-glutamyl phosphate to yield N-acetyl-L-glutamate 5-semialdehyde. This is N-acetyl-gamma-glutamyl-phosphate reductase from Rhizobium johnstonii (strain DSM 114642 / LMG 32736 / 3841) (Rhizobium leguminosarum bv. viciae).